The sequence spans 135 residues: Flagellar assembly factor FliW 2 (135 aa).

This sequence belongs to the FliW family. As to quaternary structure, interacts with translational regulator CsrA and flagellin(s).

Its subcellular location is the cytoplasm. In terms of biological role, acts as an anti-CsrA protein, binds CsrA and prevents it from repressing translation of its target genes, one of which is flagellin. Binds to flagellin and participates in the assembly of the flagellum. In Helicobacter acinonychis (strain Sheeba), this protein is Flagellar assembly factor FliW 2.